A 45-amino-acid chain; its full sequence is Large ribosomal subunit protein bL34c (45 aa).

Positions 1–10 (MSKGFSNGTN) are enriched in polar residues. A disordered region spans residues 1–45 (MSKGFSNGTNIKRVRKSGFRARMSNSSGRKILNSRRRKQRKKIAL). The span at 32–45 (LNSRRRKQRKKIAL) shows a compositional bias: basic residues.

The protein belongs to the bacterial ribosomal protein bL34 family.

Its subcellular location is the plastid. The protein resides in the chloroplast. The protein is Large ribosomal subunit protein bL34c of Gracilaria tenuistipitata var. liui (Red alga).